We begin with the raw amino-acid sequence, 366 residues long: 3-isopropylmalate dehydrogenase (366 aa).

Residue 78–91 (GPKWEDLPSHLQPE) participates in NAD(+) binding. R99, R109, R138, and D227 together coordinate substrate. 3 residues coordinate Mg(2+): D227, D251, and D255. Position 285-297 (285-297 (GSAPDIKGKNIAN)) interacts with NAD(+).

Belongs to the isocitrate and isopropylmalate dehydrogenases family. LeuB type 1 subfamily. As to quaternary structure, homodimer. It depends on Mg(2+) as a cofactor. Mn(2+) is required as a cofactor.

The protein localises to the cytoplasm. It catalyses the reaction (2R,3S)-3-isopropylmalate + NAD(+) = 4-methyl-2-oxopentanoate + CO2 + NADH. It functions in the pathway amino-acid biosynthesis; L-leucine biosynthesis; L-leucine from 3-methyl-2-oxobutanoate: step 3/4. Its function is as follows. Catalyzes the oxidation of 3-carboxy-2-hydroxy-4-methylpentanoate (3-isopropylmalate) to 3-carboxy-4-methyl-2-oxopentanoate. The product decarboxylates to 4-methyl-2 oxopentanoate. The sequence is that of 3-isopropylmalate dehydrogenase from Buchnera aphidicola subsp. Baizongia pistaciae (strain Bp).